A 77-amino-acid polypeptide reads, in one-letter code: Conotoxin Cl6.15 (77 aa).

The N-terminal stretch at 1–19 (MKLSVKFLLFLMILPLIAG) is a signal peptide. Residues 20-37 (EDMSDNDAPKSVDVQRNV) constitute a propeptide that is removed on maturation. 3 disulfides stabilise this stretch: Cys49-Cys61, Cys55-Cys66, and Cys60-Cys75.

The protein belongs to the conotoxin I1 superfamily. Expressed by the venom duct.

Its subcellular location is the secreted. The protein is Conotoxin Cl6.15 of Californiconus californicus (California cone).